A 307-amino-acid chain; its full sequence is Glycine--tRNA ligase alpha subunit (307 aa).

It belongs to the class-II aminoacyl-tRNA synthetase family. As to quaternary structure, tetramer of two alpha and two beta subunits.

The protein localises to the cytoplasm. The enzyme catalyses tRNA(Gly) + glycine + ATP = glycyl-tRNA(Gly) + AMP + diphosphate. The chain is Glycine--tRNA ligase alpha subunit from Levilactobacillus brevis (strain ATCC 367 / BCRC 12310 / CIP 105137 / JCM 1170 / LMG 11437 / NCIMB 947 / NCTC 947) (Lactobacillus brevis).